The chain runs to 101 residues: MKKAAVLAVVLSLGLAGCSKNYNDQYHGNGYRAEILFSEYNGENLTLTVRKNNCEHEDGPIETIQIGHKYDSTLVVGACVRVLDNNEGLKNISTFNPRSPL.

Positions 1–17 (MKKAAVLAVVLSLGLAG) are cleaved as a signal peptide. Cys18 carries the N-palmitoyl cysteine lipid modification. Residue Cys18 is the site of S-diacylglycerol cysteine attachment.

It localises to the cell membrane. This is an uncharacterized protein from Pasteurella multocida (strain Pm70).